A 308-amino-acid polypeptide reads, in one-letter code: Ornithine carbamoyltransferase (308 aa).

Carbamoyl phosphate contacts are provided by residues 56–59, glutamine 83, arginine 107, and 134–137; these read STRT and HPCQ. L-ornithine contacts are provided by residues asparagine 165, aspartate 225, and 229 to 230; that span reads SM. Carbamoyl phosphate is bound by residues 266-267 and arginine 294; that span reads CL.

Belongs to the aspartate/ornithine carbamoyltransferase superfamily. OTCase family.

It is found in the cytoplasm. It carries out the reaction carbamoyl phosphate + L-ornithine = L-citrulline + phosphate + H(+). The protein operates within amino-acid biosynthesis; L-arginine biosynthesis; L-arginine from L-ornithine and carbamoyl phosphate: step 1/3. Reversibly catalyzes the transfer of the carbamoyl group from carbamoyl phosphate (CP) to the N(epsilon) atom of ornithine (ORN) to produce L-citrulline. The chain is Ornithine carbamoyltransferase from Paracoccus denitrificans (strain Pd 1222).